A 391-amino-acid polypeptide reads, in one-letter code: Zinc finger protein ubi-d4 (391 aa).

Ala2 carries the N-acetylalanine modification. Glycyl lysine isopeptide (Lys-Gly) (interchain with G-Cter in SUMO2) cross-links involve residues Lys10, Lys99, Lys107, and Lys108. Disordered regions lie at residues 79–146 and 165–196; these read WRKK…LGEF and DDLD…ARKK. 2 stretches are compositionally biased toward basic and acidic residues: residues 100–110 and 126–140; these read PDTDQTLKKEG and DPLE…RVDD. Residue Ser142 is modified to Phosphoserine. Positions 165 to 174 are enriched in acidic residues; the sequence is DDLDDEDYEE. Residue Tyr172 is modified to Phosphotyrosine. At Thr176 the chain carries Phosphothreonine. Residues Lys178 and Lys196 each participate in a glycyl lysine isopeptide (Lys-Gly) (interchain with G-Cter in SUMO2) cross-link. Ser200 is modified (phosphoserine). Residues 209–232 form a C2H2-type zinc finger; that stretch reads YACDICGKRYKNRPGLSYHYAHSH. The segment at 233-266 is disordered; the sequence is LAEEEGEDKEDSQPPTPVSQRSEEQKSKKGPDGL. Phosphoserine is present on Ser244. Over residues 253–263 the composition is skewed to basic and acidic residues; the sequence is RSEEQKSKKGP. 2 PHD-type zinc fingers span residues 270-330 and 327-377; these read NNYC…CKCC and CKCC…CLDL. Ser280 is subject to Phosphoserine. Lys281 participates in a covalent cross-link: Glycyl lysine isopeptide (Lys-Gly) (interchain with G-Cter in SUMO2).

It belongs to the requiem/DPF family. As to quaternary structure, interacts with the nucleosomes, in particular nucleosomes bearing histone H3 crotonylated at 'Lys-14' (H3K14cr) for which DPF2 has high affinity. Also interacts (via PHD-type zinc finger domains) with histone H3 butyrylated at 'Lys-14' (H3K14bu), histone H3 propionylated at 'Lys-14' (H3K14pr), and histone H3 acetylated at 'Lys-14' (H3K14ac). Interacts with histone H3 acetylated at 'Lys-9' (H3K9ac), histone H3 di-methylated at 'Lys-9' (H3K9me2), and histone H3 tri-methylated at 'Lys-9' (H3K9me3). Interacts with histone H4 acetylated at 'Lys-12' (H4K12ac). Interacts with histone H4 acetylated at 'Lys-16' (H4K16ac). Interacts with SWI/SNF complex components. Interacts with SMARCA2, SMARCA4, SMARCB1 and SMARCD1. Interacts with SMARCC1, SMARCC2 and ACTL6A. Interacts with RUNX1. As to expression, ubiquitous.

The protein localises to the nucleus. It is found in the cytoplasm. Functionally, plays an active role in transcriptional regulation by binding modified histones H3 and H4. Is a negative regulator of myeloid differentiation of hematopoietic progenitor cells. Might also have a role in the development and maturation of lymphoid cells. Involved in the regulation of non-canonical NF-kappa-B pathway. The chain is Zinc finger protein ubi-d4 (DPF2) from Homo sapiens (Human).